A 324-amino-acid chain; its full sequence is Acetyl-coenzyme A carboxylase carboxyl transferase subunit alpha (324 aa).

One can recognise a CoA carboxyltransferase C-terminal domain in the interval 37-291 (ILEEKLENLE…DLMIRKTFEQ (255 aa)).

Belongs to the AccA family. As to quaternary structure, acetyl-CoA carboxylase is a heterohexamer composed of biotin carboxyl carrier protein (AccB), biotin carboxylase (AccC) and two subunits each of ACCase subunit alpha (AccA) and ACCase subunit beta (AccD).

It is found in the cytoplasm. It carries out the reaction N(6)-carboxybiotinyl-L-lysyl-[protein] + acetyl-CoA = N(6)-biotinyl-L-lysyl-[protein] + malonyl-CoA. The protein operates within lipid metabolism; malonyl-CoA biosynthesis; malonyl-CoA from acetyl-CoA: step 1/1. Its function is as follows. Component of the acetyl coenzyme A carboxylase (ACC) complex. First, biotin carboxylase catalyzes the carboxylation of biotin on its carrier protein (BCCP) and then the CO(2) group is transferred by the carboxyltransferase to acetyl-CoA to form malonyl-CoA. The sequence is that of Acetyl-coenzyme A carboxylase carboxyl transferase subunit alpha from Bacillus cereus (strain B4264).